The sequence spans 145 residues: MKKITLIGSELAKTGNEFIYLGPLEECEPCRFKRICHNNLDVGTRYKIVSVRSANHPCTVHENGVKVVEVMPAEFTIIIESKKALEGVTLTHVDVHCDRVCCENYLSCHPEGISGKYRVSSILPEKVECKKGNSLKKISIVPVQQ.

It belongs to the UPF0179 family.

The protein is UPF0179 protein MmarC7_0952 of Methanococcus maripaludis (strain C7 / ATCC BAA-1331).